We begin with the raw amino-acid sequence, 485 residues long: UDP-N-acetylmuramate--L-alanine ligase (485 aa).

Residue 120 to 126 (GSHGKTT) participates in ATP binding.

The protein belongs to the MurCDEF family.

The protein localises to the cytoplasm. It carries out the reaction UDP-N-acetyl-alpha-D-muramate + L-alanine + ATP = UDP-N-acetyl-alpha-D-muramoyl-L-alanine + ADP + phosphate + H(+). Its pathway is cell wall biogenesis; peptidoglycan biosynthesis. Cell wall formation. The polypeptide is UDP-N-acetylmuramate--L-alanine ligase (Rickettsia conorii (strain ATCC VR-613 / Malish 7)).